Reading from the N-terminus, the 468-residue chain is Charged multivesicular body protein 7 (468 aa).

2 coiled-coil regions span residues 233 to 303 (EKLL…AETD) and 353 to 379 (VSDA…MIVD). The segment at 428–468 (DVPSGPVVISPQRPTEWKTDQASRSPADGSFSRSVPEPVLQ) is disordered.

It belongs to the SNF7 family.

It is found in the cytoplasm. Its subcellular location is the nucleus envelope. In terms of biological role, ESCRT-III-like protein required to recruit the ESCRT-III complex to the nuclear envelope during late anaphase. Together with SPAST, the ESCRT-III complex promotes nuclear envelope sealing and mitotic spindle disassembly during late anaphase. Plays a role in the endosomal sorting pathway. In Xenopus tropicalis (Western clawed frog), this protein is Charged multivesicular body protein 7 (chmp7).